The following is a 338-amino-acid chain: Glycerol-3-phosphate dehydrogenase [NAD(P)+] (338 aa).

Positions 13, 14, and 108 each coordinate NADPH. Positions 108, 139, and 141 each coordinate sn-glycerol 3-phosphate. Residue Ala143 participates in NADPH binding. The sn-glycerol 3-phosphate site is built by Lys194, Asp247, Ser257, Arg258, and Asn259. Catalysis depends on Lys194, which acts as the Proton acceptor. An NADPH-binding site is contributed by Arg258. NADPH is bound by residues Val282 and Glu284.

This sequence belongs to the NAD-dependent glycerol-3-phosphate dehydrogenase family.

It is found in the cytoplasm. It carries out the reaction sn-glycerol 3-phosphate + NAD(+) = dihydroxyacetone phosphate + NADH + H(+). The enzyme catalyses sn-glycerol 3-phosphate + NADP(+) = dihydroxyacetone phosphate + NADPH + H(+). It functions in the pathway membrane lipid metabolism; glycerophospholipid metabolism. Its function is as follows. Catalyzes the reduction of the glycolytic intermediate dihydroxyacetone phosphate (DHAP) to sn-glycerol 3-phosphate (G3P), the key precursor for phospholipid synthesis. This is Glycerol-3-phosphate dehydrogenase [NAD(P)+] from Streptococcus gordonii (strain Challis / ATCC 35105 / BCRC 15272 / CH1 / DL1 / V288).